The chain runs to 89 residues: Small ribosomal subunit protein uS15 (89 aa).

This sequence belongs to the universal ribosomal protein uS15 family. Part of the 30S ribosomal subunit. Forms a bridge to the 50S subunit in the 70S ribosome, contacting the 23S rRNA.

In terms of biological role, one of the primary rRNA binding proteins, it binds directly to 16S rRNA where it helps nucleate assembly of the platform of the 30S subunit by binding and bridging several RNA helices of the 16S rRNA. Its function is as follows. Forms an intersubunit bridge (bridge B4) with the 23S rRNA of the 50S subunit in the ribosome. The chain is Small ribosomal subunit protein uS15 from Sodalis glossinidius (strain morsitans).